The chain runs to 31 residues: GIPCGESCVFIPCTVTALLGCSCKDKVCYKN.

Residues 1–31 (GIPCGESCVFIPCTVTALLGCSCKDKVCYKN) constitute a cross-link (cyclopeptide (Gly-Asn)). Intrachain disulfides connect Cys-4–Cys-21, Cys-8–Cys-23, and Cys-13–Cys-28.

In terms of processing, this is a cyclic peptide.

The protein localises to the secreted. Its function is as follows. Probably participates in a plant defense mechanism. The polypeptide is Cyclotide cter-R (Clitoria ternatea (Butterfly pea)).